A 144-amino-acid polypeptide reads, in one-letter code: Cytochrome c oxidase subunit 4 isoform 1, mitochondrial (144 aa).

Over Ser-1–Asn-73 the chain is Mitochondrial matrix. Lys-4 carries the post-translational modification N6-acetyllysine; alternate. Lys-4 carries the post-translational modification N6-succinyllysine; alternate. A phosphoserine mark is found at Ser-31 and Ser-33. An N6-acetyllysine; alternate modification is found at Lys-35. The residue at position 35 (Lys-35) is an N6-succinyllysine; alternate. The residue at position 42 (Lys-42) is an N6-acetyllysine. Residues Glu-74–Tyr-99 traverse the membrane as a helical segment. Over Val-100–Lys-144 the chain is Mitochondrial intermembrane.

This sequence belongs to the cytochrome c oxidase IV family. As to quaternary structure, component of the cytochrome c oxidase (complex IV, CIV), a multisubunit enzyme composed of 14 subunits. The complex is composed of a catalytic core of 3 subunits MT-CO1, MT-CO2 and MT-CO3, encoded in the mitochondrial DNA, and 11 supernumerary subunits COX4I, COX5A, COX5B, COX6A, COX6B, COX6C, COX7A, COX7B, COX7C, COX8 and NDUFA4, which are encoded in the nuclear genome. The complex exists as a monomer or a dimer and forms supercomplexes (SCs) in the inner mitochondrial membrane with NADH-ubiquinone oxidoreductase (complex I, CI) and ubiquinol-cytochrome c oxidoreductase (cytochrome b-c1 complex, complex III, CIII), resulting in different assemblies (supercomplex SCI(1)III(2)IV(1) and megacomplex MCI(2)III(2)IV(2)). Interacts with PHB2; the interaction decreases in absence of SPHK2. Interacts with AFG1L. Interacts with ABCB7; this interaction allows the regulation of cellular iron homeostasis and cellular reactive oxygen species (ROS) levels in cardiomyocytes. Interacts with FLVCR2; this interaction occurs in the absence of heme and is disrupted upon heme binding. Interacts with IRGC.

The protein resides in the mitochondrion inner membrane. It participates in energy metabolism; oxidative phosphorylation. Functionally, component of the cytochrome c oxidase, the last enzyme in the mitochondrial electron transport chain which drives oxidative phosphorylation. The respiratory chain contains 3 multisubunit complexes succinate dehydrogenase (complex II, CII), ubiquinol-cytochrome c oxidoreductase (cytochrome b-c1 complex, complex III, CIII) and cytochrome c oxidase (complex IV, CIV), that cooperate to transfer electrons derived from NADH and succinate to molecular oxygen, creating an electrochemical gradient over the inner membrane that drives transmembrane transport and the ATP synthase. Cytochrome c oxidase is the component of the respiratory chain that catalyzes the reduction of oxygen to water. Electrons originating from reduced cytochrome c in the intermembrane space (IMS) are transferred via the dinuclear copper A center (CU(A)) of subunit 2 and heme A of subunit 1 to the active site in subunit 1, a binuclear center (BNC) formed by heme A3 and copper B (CU(B)). The BNC reduces molecular oxygen to 2 water molecules using 4 electrons from cytochrome c in the IMS and 4 protons from the mitochondrial matrix. In Aotus azarae (Azara's night monkey), this protein is Cytochrome c oxidase subunit 4 isoform 1, mitochondrial (COX4I1).